Here is a 101-residue protein sequence, read N- to C-terminus: UPF0473 protein EF_1204 (101 aa).

This sequence belongs to the UPF0473 family.

In Enterococcus faecalis (strain ATCC 700802 / V583), this protein is UPF0473 protein EF_1204.